The primary structure comprises 516 residues: Extracellular endo-inulinase inuA (516 aa).

The first 25 residues, 1–25 (MLNPKVAYMVWMTCLGLMLPSQAQS), serve as a signal peptide directing secretion. Substrate contacts are provided by residues 40–43 (WMNE), Gln-59, Trp-67, and 99–100 (FT). Residue Glu-43 is part of the active site. The N-linked (GlcNAc...) asparagine glycan is linked to Asn-109. 175 to 176 (RD) contributes to the substrate binding site. N-linked (GlcNAc...) asparagine glycosylation occurs at Asn-210. Substrate is bound at residue Glu-233. N-linked (GlcNAc...) asparagine glycosylation is found at Asn-372 and Asn-419.

It belongs to the glycosyl hydrolase 32 family.

The protein resides in the secreted. It catalyses the reaction Endohydrolysis of (2-&gt;1)-beta-D-fructosidic linkages in inulin.. Activity is stimulated by Mn(2+), Fe(2+) Ca(2+) metal ions and DTT; and inhibited by glucose, Mg(2+), Zn(2+), Cu(2+), Hg(2+), Al(3+), and Fe(3+). Functionally, endo-inulinase involved in utilization of the plant storage polymer inulin, consisting of fructooligosaccharides with a degree of polymerization (DP) value from 2 to 60. The sequence is that of Extracellular endo-inulinase inuA (inuA) from Aspergillus niger.